We begin with the raw amino-acid sequence, 216 residues long: Cobalt-zinc-cadmium resistance protein CzcN (216 aa).

The next 3 membrane-spanning stretches (helical) occupy residues I27–R47, G50–V70, and E116–I136.

It to A.xylosoxydans NccN.

Its subcellular location is the cell inner membrane. Component of the CZC cation-efflux system that confers resistance to cobalt, zinc and cadmium. In Cupriavidus metallidurans (strain ATCC 43123 / DSM 2839 / NBRC 102507 / CH34) (Ralstonia metallidurans), this protein is Cobalt-zinc-cadmium resistance protein CzcN (czcN).